A 389-amino-acid chain; its full sequence is Alpha-(1,3)-fucosyltransferase 7 (389 aa).

Over 1–55 (MPTPCPPACLSTPGTHRLLPFPDWKAPSWESRKEATCNSSSPGPWAEPTVQGYHP) the chain is Cytoplasmic. Residues 56 to 78 (TRRLRAWGGLAGGATFMVIWFFW) form a helical; Signal-anchor for type II membrane protein membrane-spanning segment. The Lumenal portion of the chain corresponds to 79–389 (LWGSAPGSAP…YEDLESWFQA (311 aa)). Cys115 and Cys123 are joined by a disulfide. Residue Asn128 is glycosylated (N-linked (GlcNAc...) asparagine). Cys258 and Cys261 are oxidised to a cystine. Asn338 is a glycosylation site (N-linked (GlcNAc...) asparagine). Residues Cys365 and Cys368 are joined by a disulfide bond.

Belongs to the glycosyltransferase 10 family. N-glycosylated. Highly expressed in lung and bone marrow and to a much lesser extent in spleen, salivary gland and skeletal muscle.

The protein resides in the golgi apparatus. It localises to the golgi stack membrane. It carries out the reaction an N-acetyl-alpha-neuraminyl-(2-&gt;3)-beta-D-galactosyl-(1-&gt;4)-N-acetyl-beta-D-glucosaminyl derivative + GDP-beta-L-fucose = an alpha-Neu5Ac-(2-&gt;3)-beta-D-Gal-(1-&gt;4)-[alpha-L-Fuc-(1-&gt;3)]-beta-D-GlcNAc derivative + GDP + H(+). It catalyses the reaction an alpha-Neu5Ac-(2-&gt;3)-beta-D-Gal-(1-&gt;4)-beta-D-GlcNAc6S derivative + GDP-beta-L-fucose = an alpha-Neu5Ac-(2-&gt;3)-beta-D-Gal-(1-&gt;4)-[alpha-L-Fuc-(1-&gt;3)]-beta-D-GlcNAc6S derivative + GDP + H(+). The catalysed reaction is a neolactoside IV(3)-alpha-NeuAc-nLc4Cer + GDP-beta-L-fucose = a neolactoside IV(3)-alpha-NeuNAc,III(3)-alpha-Fuc-nLc4Cer + GDP + H(+). The enzyme catalyses a neolactoside VI(3)-alpha-NeuNAc-nLc6Cer + GDP-beta-L-fucose = a neolactoside VI(3)-alpha-NeuAc,V(3)-alphaFuc-nLc6Cer + GDP + H(+). It carries out the reaction an alpha-Neu5Ac-(2-&gt;3)-beta-D-Gal-(1-&gt;4)-beta-D-GlcNAc-(1-&gt;3)-beta-D-Gal-(1-&gt;4)-[alpha-L-Fuc-(1-&gt;3)]-beta-D-GlcNAc derivative + GDP-beta-L-fucose = an alpha-Neu5Ac-(2-&gt;3)-beta-D-Gal-(1-&gt;4)-[alpha-L-Fuc-(1-&gt;3)]-beta-D-GlcNAc-(1-&gt;3)-beta-D-Gal-(1-&gt;4)-[alpha-L-Fuc-(1-&gt;3)]-beta-D-GlcNAc derivative + GDP + H(+). It catalyses the reaction alpha-Neu5Ac-(2-&gt;3)-beta-D-Gal-(1-&gt;4)-beta-D-GlcNAc-(1-&gt;3)-beta-D-Gal-(1-&gt;4)-D-Glc + GDP-beta-L-fucose = alpha-Neu5Ac-(2-&gt;3)-beta-D-Gal-(1-&gt;4)-[alpha-L-Fuc-(1-&gt;3)]-beta-D-GlcNAc-(1-&gt;3)-beta-D-Gal-(1-&gt;4)-D-Glc + GDP + H(+). The catalysed reaction is alpha-Neu5Ac-(2-&gt;3)-beta-D-Gal-(1-&gt;4)-beta-D-GlcNAc-(1-&gt;3)-beta-D-Gal-(1-&gt;4)-[alpha-L-Fuc-(1-&gt;3)]-beta-D-GlcNAc-(1-&gt;3)-beta-D-Gal-(1-&gt;4)-beta-D-GlcNAc + GDP-beta-L-fucose = alpha-Neu5Ac-(2-&gt;3)-beta-D-Gal-(1-&gt;4)-[alpha-L-Fuc-(1-&gt;3)]-beta-D-GlcNAc-(1-&gt;3)-beta-D-Gal-(1-&gt;4)-[alpha-L-Fuc-(1-&gt;3)]-beta-D-GlcNAc-(1-&gt;3)-beta-D-Gal-(1-&gt;4)-beta-D-GlcNAc + GDP + H(+). The enzyme catalyses alpha-Neu5Ac-(2-&gt;3)-beta-D-Gal-(1-&gt;4)-beta-D-GlcNAc-(1-&gt;3)-beta-D-Gal-(1-&gt;4)-beta-D-GlcNAc-(1-&gt;3)-beta-D-Gal-(1-&gt;4)-beta-D-GlcNAc + GDP-beta-L-fucose = alpha-Neu5Ac-(2-&gt;3)-beta-D-Gal-(1-&gt;4)-[alpha-L-Fuc-(1-&gt;3)]-beta-D-GlcNAc-(1-&gt;3)-beta-D-Gal-(1-&gt;4)-beta-D-GlcNAc-(1-&gt;3)-beta-D-Gal-(1-&gt;4)-beta-D-GlcNAc + GDP + H(+). It participates in protein modification; protein glycosylation. Inhibited by NaCl. Inhibited by GDP in a concentration dependent manner, with an IC(50) value of 93 uM. Also inhibited by GMP and GTP. Inhibited by N-ethylmaleimide. Activated by poly(ethylene glycol) by enhancing the thermal stability of FUT7. Activated by Mn2+, Ca2+, and Mg2+. Both panosialin A and B inhibit activity with IC(50) values of 4.8 and 5.3 ug/ml, respectively. Inhibited by gallic acid (GA) and (-)-epigallocatechin gallate (EGCG) in a time-dependent and irreversible manner with IC(50) values of 60 and 700 nM, respectively. Catalyzes the transfer of L-fucose, from a guanosine diphosphate-beta-L-fucose, to the N-acetyl glucosamine (GlcNAc) of a distal alpha2,3 sialylated lactosamine unit of a glycoprotein or a glycolipid-linked sialopolylactosamines chain through an alpha-1,3 glycosidic linkage and participates in the final fucosylation step in the biosynthesis of the sialyl Lewis X (sLe(x)), a carbohydrate involved in cell and matrix adhesion during leukocyte trafficking and fertilization. In vitro, also synthesizes sialyl-dimeric-Lex structures, from VIM-2 structures and both di-fucosylated and trifucosylated structures from mono-fucosylated precursors. However does not catalyze alpha 1-3 fucosylation when an internal alpha 1-3 fucosylation is present in polylactosamine chain and the fucosylation rate of the internal GlcNAc residues is reduced once fucose has been added to the distal GlcNAc. Also catalyzes the transfer of a fucose from GDP-beta-fucose to the 6-sulfated a(2,3)sialylated substrate to produce 6-sulfo sLex mediating significant L-selectin-dependent cell adhesion. Through sialyl-Lewis(x) biosynthesis, can control SELE- and SELP-mediated cell adhesion with leukocytes and allows leukocytes tethering and rolling along the endothelial tissue thereby enabling the leukocytes to accumulate at a site of inflammation. May enhance embryo implantation through sialyl Lewis X (sLeX)-mediated adhesion of embryo cells to endometrium. May affect insulin signaling by up-regulating the phosphorylation and expression of some signaling molecules involved in the insulin-signaling pathway through SLe(x) which is present on the glycans of the INSRR alpha subunit. The sequence is that of Alpha-(1,3)-fucosyltransferase 7 from Mus musculus (Mouse).